The following is a 184-amino-acid chain: Putative serine carboxypeptidase-like 52 (184 aa).

Positions 1-22 (MRTFSPKLLLLLLLVLRHHAES) are cleaved as a signal peptide. A glycan (N-linked (GlcNAc...) asparagine) is linked at N93.

It belongs to the peptidase S10 family.

The protein localises to the secreted. This Arabidopsis thaliana (Mouse-ear cress) protein is Putative serine carboxypeptidase-like 52 (SCPL52).